The following is a 291-amino-acid chain: Probable endonuclease 4 (291 aa).

Residues His72, His112, Glu147, Asp181, His184, His215, Asp228, His230, and Glu260 each contribute to the Zn(2+) site.

This sequence belongs to the AP endonuclease 2 family. The cofactor is Zn(2+).

It carries out the reaction Endonucleolytic cleavage to 5'-phosphooligonucleotide end-products.. Endonuclease IV plays a role in DNA repair. It cleaves phosphodiester bonds at apurinic or apyrimidinic (AP) sites, generating a 3'-hydroxyl group and a 5'-terminal sugar phosphate. This is Probable endonuclease 4 from Mycoplasma genitalium (strain ATCC 33530 / DSM 19775 / NCTC 10195 / G37) (Mycoplasmoides genitalium).